Reading from the N-terminus, the 209-residue chain is Ribosomal RNA large subunit methyltransferase E (209 aa).

Residues glycine 63, tryptophan 65, aspartate 83, aspartate 99, and aspartate 124 each coordinate S-adenosyl-L-methionine. The Proton acceptor role is filled by lysine 164.

The protein belongs to the class I-like SAM-binding methyltransferase superfamily. RNA methyltransferase RlmE family.

It localises to the cytoplasm. It catalyses the reaction uridine(2552) in 23S rRNA + S-adenosyl-L-methionine = 2'-O-methyluridine(2552) in 23S rRNA + S-adenosyl-L-homocysteine + H(+). Functionally, specifically methylates the uridine in position 2552 of 23S rRNA at the 2'-O position of the ribose in the fully assembled 50S ribosomal subunit. This chain is Ribosomal RNA large subunit methyltransferase E, found in Buchnera aphidicola subsp. Cinara cedri (strain Cc).